Reading from the N-terminus, the 57-residue chain is Toxin GhoT (57 aa).

2 helical membrane passes run 7-27 (ILIFYVIGVNISFVIIWFISH) and 37-57 (AFLVGITWPMSLPVALLFSLF).

The protein belongs to the GhoT/OrtT toxin family.

The protein resides in the cell inner membrane. Its function is as follows. Toxic component of a type V toxin-antitoxin (TA) system. Causes membrane damage when induced by MqsR, slowing cell growth and leading to the formation of dormant persister cells; involved with GhoS, its antitoxin, in reducing cell growth during antibacterial stress. Its toxic effects are neutralized by GhoS, which digests ghoT transcripts in a sequence-specific manner. The sequence is that of Toxin GhoT from Escherichia coli O157:H7.